A 90-amino-acid chain; its full sequence is Probable Fe(2+)-trafficking protein (90 aa).

This sequence belongs to the Fe(2+)-trafficking protein family. In terms of assembly, monomer.

Its function is as follows. Could be a mediator in iron transactions between iron acquisition and iron-requiring processes, such as synthesis and/or repair of Fe-S clusters in biosynthetic enzymes. The chain is Probable Fe(2+)-trafficking protein from Yersinia pseudotuberculosis serotype O:1b (strain IP 31758).